We begin with the raw amino-acid sequence, 200 residues long: Pyridoxal 5'-phosphate synthase subunit PdxT (200 aa).

Residue 46 to 48 coordinates L-glutamine; sequence GES. Cys-78 serves as the catalytic Nucleophile. L-glutamine is bound by residues Arg-107 and 138 to 139; that span reads IR. Catalysis depends on charge relay system residues His-175 and Glu-177.

The protein belongs to the glutaminase PdxT/SNO family. In the presence of PdxS, forms a dodecamer of heterodimers. Only shows activity in the heterodimer.

The catalysed reaction is aldehydo-D-ribose 5-phosphate + D-glyceraldehyde 3-phosphate + L-glutamine = pyridoxal 5'-phosphate + L-glutamate + phosphate + 3 H2O + H(+). The enzyme catalyses L-glutamine + H2O = L-glutamate + NH4(+). Its pathway is cofactor biosynthesis; pyridoxal 5'-phosphate biosynthesis. In terms of biological role, catalyzes the hydrolysis of glutamine to glutamate and ammonia as part of the biosynthesis of pyridoxal 5'-phosphate. The resulting ammonia molecule is channeled to the active site of PdxS. The protein is Pyridoxal 5'-phosphate synthase subunit PdxT of Corynebacterium glutamicum (strain R).